The following is a 250-amino-acid chain: Small ribosomal subunit protein uS2 (250 aa).

The protein belongs to the universal ribosomal protein uS2 family.

This Acidovorax ebreus (strain TPSY) (Diaphorobacter sp. (strain TPSY)) protein is Small ribosomal subunit protein uS2.